The chain runs to 87 residues: Pro-gurmarin (87 aa).

Residues 1–20 (MAKFAAIVLLILVASATVNA) form the signal peptide. A propeptide spanning residues 21 to 52 (VKEHDELPTTGMSRKILLQPVFKSLIISIAEG) is cleaved from the precursor. Position 53 is a pyrrolidone carboxylic acid (Gln53). Cystine bridges form between Cys55–Cys70, Cys62–Cys75, and Cys69–Cys85.

In terms of tissue distribution, expressed in leaves (at protein level).

Functionally, peptide that strongly, but reversibly, suppresses the sweet taste-response to various sweeteners, including sugars, sweet amino acids and the artificial sweetener saccharin. In rodents, potentially binds to a sweet taste receptor present on apical microvilli of a subset of taste bud cells. Highly effective at blocking the sweet taste-response in rodents such as rats and mice, though mice may possess a mix of gurmarin-sensitive and -insensitive receptors. Has almost no effect on the sweet taste-response in humans. Inhibits Staphylococcus aureus biofilm formation without affecting bacterial viability. May be one of at least 9 different disulfide-rich peptides produced with varying properties. The sequence is that of Pro-gurmarin from Gymnema sylvestre (Gurmar).